A 462-amino-acid chain; its full sequence is Coagulation factor IX (462 aa).

An N-terminal signal peptide occupies residues 1 to 21 (MADAPGLIPIFLLGYLLSTEC). Positions 22–39 (AVFLDRENATKILTRPKR) are excised as a propeptide. Ca(2+)-binding residues include Y40, N41, E46, E47, E54, E56, E59, E60, E65, E66, and E69. Positions 40–86 (YNSGKLEEFVQGNLERECIEERCSFEEAREVFENTEKTTEFWKQYVD) constitute a Gla domain. 4-carboxyglutamate occurs at positions 46, 47, 54, 56, 59, 60, 65, 66, 69, 72, and 75. E54 is a Mg(2+) binding site. Cysteines 57 and 62 form a disulfide. Residue E59 coordinates Mg(2+). E65 serves as a coordination point for Mg(2+). E69 is a Mg(2+) binding site. Position 75 (E75) interacts with Ca(2+). E75 is a Mg(2+) binding site. O-linked (GalNAc...) threonine glycosylation is present at T78. The Ca(2+) site is built by E79, D86, G87, and Q89. At E79 the chain carries 4-carboxyglutamate. E79 is a Mg(2+) binding site. The 37-residue stretch at 86-122 (DGDQCESNPCLNGGICKDDINSYECWCQAGFEGRNCE) folds into the EGF-like; calcium-binding domain. 10 disulfide bridges follow: C90–C101, C95–C110, C112–C121, C127–C138, C134–C148, C150–C163, C171–C336, C253–C269, C383–C397, and C408–C436. O-linked (Glc...) serine glycosylation occurs at S92. Positions 103 and 104 each coordinate Ca(2+). Residue D103 is modified to (3R)-3-hydroxyaspartate. S107 carries the phosphoserine modification. Positions 186–227 (AETVFSNTDYGNSTELILDDITNSTILDNLTENSEPINDFTR) are cleaved as a propeptide — activation peptide. The residue at position 195 (Y195) is a Sulfotyrosine. Phosphoserine is present on S198. At T199 the chain carries Phosphothreonine; alternate. T199 is a glycosylation site (O-linked (GalNAc...) threonine; alternate). N-linked (GlcNAc...) asparagine glycosylation is found at N208 and N214. Residues T216 and T226 are each glycosylated (O-linked (GalNAc...) threonine). In terms of domain architecture, Peptidase S1 spans 228 to 460 (VVGGENAKPG…YVNWIKEKTK (233 aa)). H268 acts as the Charge relay system in catalysis. Positions 282, 284, 287, 289, and 292 each coordinate Ca(2+). Residue N307 is glycosylated (N-linked (GlcNAc...) asparagine). Catalysis depends on D316, which acts as the Charge relay system. S412 (charge relay system) is an active-site residue.

Belongs to the peptidase S1 family. As to quaternary structure, heterodimer of a light chain and a heavy chain; disulfide-linked. Interacts (inactive and activated) with F11 (activated) in calcium-dependent manner. Interacts with SERPINC1. Interacts (inactive and activated) with nitrophorin-2, an anticoagulant protein from Rhodnius prolixus. In terms of processing, activated by factor XIa, which excises the activation peptide. The propeptide can also be removed by snake venom protease. Activated by coagulation factor VIIa-tissue factor (F7-F3) complex in calcium-dependent manner. Post-translationally, the iron and 2-oxoglutarate dependent 3-hydroxylation of aspartate and asparagine is (R) stereospecific within EGF domains. Predominantly O-glucosylated at Ser-92 by POGLUT1 in vitro.

The protein resides in the secreted. The catalysed reaction is Selective cleavage of Arg-|-Ile bond in factor X to form factor Xa.. Functionally, factor IX is a vitamin K-dependent plasma protein that participates in the intrinsic pathway of blood coagulation by converting factor X to its active form in the presence of Ca(2+) ions, phospholipids, and factor VIIIa. This chain is Coagulation factor IX (F9), found in Rattus norvegicus (Rat).